Consider the following 115-residue polypeptide: HTH-type transcriptional regulator SarR (115 aa).

The H-T-H motif DNA-binding region spans Ser51 to Asp74.

It belongs to the SarA family. Homodimer.

The protein localises to the cytoplasm. Negative regulator of sarA transcription at late exponential and stationary growth phases. It contributes to the modulation of target genes downstream of the sarA regulatory cascade. Also, positively regulates expression of primary transcripts RNAII and RNAIII generated by agr (virulence accessory gene regulator) locus. This chain is HTH-type transcriptional regulator SarR (sarR), found in Staphylococcus aureus (strain NCTC 8325 / PS 47).